We begin with the raw amino-acid sequence, 121 residues long: MQHYLLDSNQRLNVSFSKDSVAAYYHCFNQPYSKEVPPLMCASLWSKFDLFKKYANSELILTKSVINQTQKIKVDTIYVGHLEDIECRQIRNITRYTMALTLTKNDQHVITVTQTFIKAMK.

The chain is Protein VraC (vraC) from Staphylococcus aureus (strain MRSA252).